The sequence spans 466 residues: Chromosomal replication initiator protein DnaA (466 aa).

Residues 1 to 86 (MSLSLWQQCL…EVGTKPVTQT (86 aa)) form a domain I, interacts with DnaA modulators region. The segment at 86–129 (TLKTPVHNVVAPTQTTTAQPQRVAPAARSGWDNVPAPAEPTYRS) is domain II. The tract at residues 130-346 (NVNVKHTFDN…GALNRVIANA (217 aa)) is domain III, AAA+ region. The ATP site is built by Gly174, Gly176, Lys177, and Thr178. The domain IV, binds dsDNA stretch occupies residues 347–466 (NFTGRAITID…FSNLIRTLSS (120 aa)).

The protein belongs to the DnaA family. As to quaternary structure, oligomerizes as a right-handed, spiral filament on DNA at oriC.

It is found in the cytoplasm. In terms of biological role, plays an essential role in the initiation and regulation of chromosomal replication. ATP-DnaA binds to the origin of replication (oriC) to initiate formation of the DNA replication initiation complex once per cell cycle. Binds the DnaA box (a 9 base pair repeat at the origin) and separates the double-stranded (ds)DNA. Forms a right-handed helical filament on oriC DNA; dsDNA binds to the exterior of the filament while single-stranded (ss)DNA is stabiized in the filament's interior. The ATP-DnaA-oriC complex binds and stabilizes one strand of the AT-rich DNA unwinding element (DUE), permitting loading of DNA polymerase. After initiation quickly degrades to an ADP-DnaA complex that is not apt for DNA replication. Binds acidic phospholipids. The chain is Chromosomal replication initiator protein DnaA from Salmonella dublin (strain CT_02021853).